The following is a 140-amino-acid chain: Nucleoside diphosphate kinase (140 aa).

ATP is bound by residues Lys11, Phe59, Arg87, Thr93, Arg104, and Asn114. His117 serves as the catalytic Pros-phosphohistidine intermediate.

It belongs to the NDK family. Homotetramer. The cofactor is Mg(2+).

It localises to the cytoplasm. It catalyses the reaction a 2'-deoxyribonucleoside 5'-diphosphate + ATP = a 2'-deoxyribonucleoside 5'-triphosphate + ADP. It carries out the reaction a ribonucleoside 5'-diphosphate + ATP = a ribonucleoside 5'-triphosphate + ADP. In terms of biological role, major role in the synthesis of nucleoside triphosphates other than ATP. The ATP gamma phosphate is transferred to the NDP beta phosphate via a ping-pong mechanism, using a phosphorylated active-site intermediate. The chain is Nucleoside diphosphate kinase from Acidiphilium cryptum (strain JF-5).